The sequence spans 191 residues: Ribosomal RNA small subunit methyltransferase G (191 aa).

S-adenosyl-L-methionine-binding positions include Gly-62, Phe-67, 111–112 (IE), and Arg-124.

The protein belongs to the methyltransferase superfamily. RNA methyltransferase RsmG family.

The protein localises to the cytoplasm. The enzyme catalyses guanosine(527) in 16S rRNA + S-adenosyl-L-methionine = N(7)-methylguanosine(527) in 16S rRNA + S-adenosyl-L-homocysteine. Specifically methylates the N7 position of guanine in position 527 of 16S rRNA. The protein is Ribosomal RNA small subunit methyltransferase G of Rickettsia akari (strain Hartford).